Here is a 546-residue protein sequence, read N- to C-terminus: Probable protein kinase UbiB (546 aa).

The Protein kinase domain maps to 124 to 502; that stretch reads DFDIQPLASA…HVRQSQSRYL (379 aa). ATP is bound by residues 130-138 and Lys153; that span reads LASASIAQV. Asp288 (proton acceptor) is an active-site residue. The next 2 helical transmembrane spans lie at 501–521 and 522–542; these read YLLG…VNRP and EWGL…LVGW.

It belongs to the ABC1 family. UbiB subfamily.

It is found in the cell inner membrane. The protein operates within cofactor biosynthesis; ubiquinone biosynthesis [regulation]. Is probably a protein kinase regulator of UbiI activity which is involved in aerobic coenzyme Q (ubiquinone) biosynthesis. The protein is Probable protein kinase UbiB of Salmonella gallinarum (strain 287/91 / NCTC 13346).